The sequence spans 471 residues: Uronate isomerase (471 aa).

Belongs to the metallo-dependent hydrolases superfamily. Uronate isomerase family.

It catalyses the reaction D-glucuronate = D-fructuronate. The catalysed reaction is aldehydo-D-galacturonate = keto-D-tagaturonate. It functions in the pathway carbohydrate metabolism; pentose and glucuronate interconversion. This chain is Uronate isomerase, found in Xanthomonas campestris pv. campestris (strain B100).